Consider the following 78-residue polypeptide: uncharacterized protein (78 aa).

2 consecutive transmembrane segments (helical) span residues leucine 12–valine 32 and glycine 51–histidine 71.

Its subcellular location is the cell membrane. This is an uncharacterized protein from Treponema pallidum (strain Nichols).